The following is a 164-amino-acid chain: Nucleotide-binding protein Emin_0136 (164 aa).

Belongs to the YajQ family.

In terms of biological role, nucleotide-binding protein. This Elusimicrobium minutum (strain Pei191) protein is Nucleotide-binding protein Emin_0136.